The following is a 644-amino-acid chain: Exoribonuclease 2 (644 aa).

Positions 189-516 (REDLTALNFV…NHRLLKAIIT (328 aa)) constitute an RNB domain. The S1 motif domain occupies 561–643 (DTRFTAEIID…ETRNVIARPV (83 aa)).

The protein belongs to the RNR ribonuclease family. RNase II subfamily.

The protein resides in the cytoplasm. It catalyses the reaction Exonucleolytic cleavage in the 3'- to 5'-direction to yield nucleoside 5'-phosphates.. In terms of biological role, involved in mRNA degradation. Hydrolyzes single-stranded polyribonucleotides processively in the 3' to 5' direction. This chain is Exoribonuclease 2, found in Yersinia pseudotuberculosis serotype O:3 (strain YPIII).